We begin with the raw amino-acid sequence, 199 residues long: MRLCDKDILTHLQEGKISITPEPDYAEISGVTVDIRLGNKFRVFTEHQAPYIDLSGPKAQVQEALNTVMSDEISVGQDKSFYLHPGELALAVTLESVTLPGNIVGWLDGRSSLARLGLMVHVTAHRIDPGWSGNIVLEFFNSGKLPLALKPGMKIGALSFEVMSDFAEKPYNARVDAKYKNQEGAIASRISGDDKTSTQ.

DCTP-binding positions include 110–115 (RSSLAR), D128, 136–138 (VLE), Y171, and Q182. E138 acts as the Proton donor/acceptor in catalysis.

It belongs to the dCTP deaminase family. Homotrimer.

It catalyses the reaction dCTP + H2O + H(+) = dUTP + NH4(+). The protein operates within pyrimidine metabolism; dUMP biosynthesis; dUMP from dCTP (dUTP route): step 1/2. Its function is as follows. Catalyzes the deamination of dCTP to dUTP. The protein is dCTP deaminase of Pseudoalteromonas atlantica (strain T6c / ATCC BAA-1087).